The chain runs to 704 residues: Ribosomal RNA large subunit methyltransferase K/L (704 aa).

The 112-residue stretch at 43–154 (TMYQSLLWSR…KEKASLSLDL (112 aa)) folds into the THUMP domain.

The protein belongs to the methyltransferase superfamily. RlmKL family.

It localises to the cytoplasm. It carries out the reaction guanosine(2445) in 23S rRNA + S-adenosyl-L-methionine = N(2)-methylguanosine(2445) in 23S rRNA + S-adenosyl-L-homocysteine + H(+). The catalysed reaction is guanosine(2069) in 23S rRNA + S-adenosyl-L-methionine = N(2)-methylguanosine(2069) in 23S rRNA + S-adenosyl-L-homocysteine + H(+). Specifically methylates the guanine in position 2445 (m2G2445) and the guanine in position 2069 (m7G2069) of 23S rRNA. This is Ribosomal RNA large subunit methyltransferase K/L from Proteus mirabilis (strain HI4320).